A 209-amino-acid polypeptide reads, in one-letter code: MGDMYDEQFDKAGGPADLMDDSWVESTAWKDLLKKLHSVKFALQSGRDEITGLLTTLSRQCPYSPYEQFPERKVYFLLDSRANNALGVIQNASAFKRRADEKNAVAGVTNIPANPNTTVTTNQGSTTTTKANTSSTLEEDLYTYYKFDDASTTFHKSLTSLENMQLKSYYRRNFEKNFGVKFGSASTPASGGSGATPPPASGGAVRPNP.

Disordered regions lie at residues 108-132 (VTNI…TKAN) and 181-209 (KFGS…RPNP). A compositionally biased stretch (low complexity) spans 116–132 (NTTVTTNQGSTTTTKAN).

It is found in the virion. The polypeptide is Coat protein (Tobacco rattle virus (strain PLB)).